Reading from the N-terminus, the 278-residue chain is Tryptophan synthase alpha chain (278 aa).

Catalysis depends on proton acceptor residues Glu50 and Asp61.

Belongs to the TrpA family. As to quaternary structure, tetramer of two alpha and two beta chains.

It carries out the reaction (1S,2R)-1-C-(indol-3-yl)glycerol 3-phosphate + L-serine = D-glyceraldehyde 3-phosphate + L-tryptophan + H2O. It participates in amino-acid biosynthesis; L-tryptophan biosynthesis; L-tryptophan from chorismate: step 5/5. In terms of biological role, the alpha subunit is responsible for the aldol cleavage of indoleglycerol phosphate to indole and glyceraldehyde 3-phosphate. This is Tryptophan synthase alpha chain from Rhodopseudomonas palustris (strain BisB5).